Reading from the N-terminus, the 100-residue chain is Urease subunit gamma (100 aa).

This sequence belongs to the urease gamma subunit family. In terms of assembly, heterotrimer of UreA (gamma), UreB (beta) and UreC (alpha) subunits. Three heterotrimers associate to form the active enzyme.

The protein resides in the cytoplasm. It catalyses the reaction urea + 2 H2O + H(+) = hydrogencarbonate + 2 NH4(+). It participates in nitrogen metabolism; urea degradation; CO(2) and NH(3) from urea (urease route): step 1/1. In Chelativorans sp. (strain BNC1), this protein is Urease subunit gamma.